A 401-amino-acid chain; its full sequence is MTELKLDPYFGEYGGMYVPQILVPALKQLESAFVDAQQDPAFQAEFTDLLKNYAGRPTALTLTRNLSPNPLVKIYLKREDLLHGGAHKTNQVLGQALLAKRMGKKEIIAETGAGQHGVATALACALLGLKCKVYMGAKDVERQSPNVFRMKLMGAEVIPVTSGSATLKDACNEAMRDWSASYDKAHYLLGTAAGPHPFPTIVREFQRMIGEETKQQILEKEGRLPDAVIACVGGGSNAIGMFADFIDEPSVELIGVEPAGKGIDTPMHGAPLKHGKTGIFFGMKAPLMQDRDGQIEESYSVSAGLDFPSVGPQHAHLNAIGRARYESATDDEALAMFQQLARCEGIIPALESAHALAYAVKLAKTATKETILVVNLSGRGDKDIFTVSDILAAKEQESGND.

Lys-88 is subject to N6-(pyridoxal phosphate)lysine.

It belongs to the TrpB family. As to quaternary structure, tetramer of two alpha and two beta chains. Pyridoxal 5'-phosphate is required as a cofactor.

It catalyses the reaction (1S,2R)-1-C-(indol-3-yl)glycerol 3-phosphate + L-serine = D-glyceraldehyde 3-phosphate + L-tryptophan + H2O. Its pathway is amino-acid biosynthesis; L-tryptophan biosynthesis; L-tryptophan from chorismate: step 5/5. In terms of biological role, the beta subunit is responsible for the synthesis of L-tryptophan from indole and L-serine. This is Tryptophan synthase beta chain from Shewanella denitrificans (strain OS217 / ATCC BAA-1090 / DSM 15013).